The following is a 186-amino-acid chain: Crossover junction endodeoxyribonuclease RuvC (186 aa).

Residues Asp14, Glu73, and Asp145 contribute to the active site. Positions 14, 73, and 145 each coordinate Mg(2+). Residues 162–186 (GRSLPPSRGRRRSGSRQRWRDYRPS) are disordered. The segment covering 169-178 (RGRRRSGSRQ) has biased composition (basic residues).

Belongs to the RuvC family. As to quaternary structure, homodimer which binds Holliday junction (HJ) DNA. The HJ becomes 2-fold symmetrical on binding to RuvC with unstacked arms; it has a different conformation from HJ DNA in complex with RuvA. In the full resolvosome a probable DNA-RuvA(4)-RuvB(12)-RuvC(2) complex forms which resolves the HJ. The cofactor is Mg(2+).

The protein resides in the cytoplasm. The catalysed reaction is Endonucleolytic cleavage at a junction such as a reciprocal single-stranded crossover between two homologous DNA duplexes (Holliday junction).. In terms of biological role, the RuvA-RuvB-RuvC complex processes Holliday junction (HJ) DNA during genetic recombination and DNA repair. Endonuclease that resolves HJ intermediates. Cleaves cruciform DNA by making single-stranded nicks across the HJ at symmetrical positions within the homologous arms, yielding a 5'-phosphate and a 3'-hydroxyl group; requires a central core of homology in the junction. The consensus cleavage sequence is 5'-(A/T)TT(C/G)-3'. Cleavage occurs on the 3'-side of the TT dinucleotide at the point of strand exchange. HJ branch migration catalyzed by RuvA-RuvB allows RuvC to scan DNA until it finds its consensus sequence, where it cleaves and resolves the cruciform DNA. The sequence is that of Crossover junction endodeoxyribonuclease RuvC from Chromohalobacter salexigens (strain ATCC BAA-138 / DSM 3043 / CIP 106854 / NCIMB 13768 / 1H11).